The following is a 445-amino-acid chain: Phosphoglucosamine mutase (445 aa).

The active-site Phosphoserine intermediate is S102. Residues S102, D241, D243, and D245 each contribute to the Mg(2+) site. S102 carries the phosphoserine modification.

This sequence belongs to the phosphohexose mutase family. Requires Mg(2+) as cofactor. Post-translationally, activated by phosphorylation.

The catalysed reaction is alpha-D-glucosamine 1-phosphate = D-glucosamine 6-phosphate. Catalyzes the conversion of glucosamine-6-phosphate to glucosamine-1-phosphate. This Photorhabdus laumondii subsp. laumondii (strain DSM 15139 / CIP 105565 / TT01) (Photorhabdus luminescens subsp. laumondii) protein is Phosphoglucosamine mutase.